The primary structure comprises 177 residues: Thymidine kinase (177 aa).

11–18 (GPMLSGKS) serves as a coordination point for ATP. Glu83 functions as the Proton acceptor in the catalytic mechanism. Phe113 contributes to the substrate binding site. Zn(2+) contacts are provided by Cys138 and Cys141. 157–161 (IEIIG) is a substrate binding site. The Zn(2+) site is built by Cys170 and Cys173.

This sequence belongs to the thymidine kinase family. As to quaternary structure, homotetramer. Two molecules of substrate bind to each enzyme tetramer.

It carries out the reaction thymidine + ATP = dTMP + ADP + H(+). Its function is as follows. Phosphorylates thymidine and thymidine analogs, such as azidothymidine (AZT). Part of the salvage pathway for pyrimidine deoxyribonucleotide synthesis. The polypeptide is Thymidine kinase (OPG101) (Monkeypox virus (strain Zaire-96-I-16) (MPX)).